Here is a 61-residue protein sequence, read N- to C-terminus: Small ribosomal subunit protein eS31 (61 aa).

Zn(2+)-binding residues include Cys22, Cys25, Cys38, and Cys41. The C4-type zinc-finger motif lies at 22-41; sequence CPRCGSFMAEHKDRYHCGKC.

This sequence belongs to the eukaryotic ribosomal protein eS31 family. As to quaternary structure, part of the 30S ribosomal subunit. It depends on Zn(2+) as a cofactor.

The protein is Small ribosomal subunit protein eS31 of Nanoarchaeum equitans (strain Kin4-M).